Consider the following 205-residue polypeptide: Phosphoenolpyruvate guanylyltransferase (205 aa).

Positions 137, 153, and 156 each coordinate phosphoenolpyruvate.

The protein belongs to the CofC family.

It carries out the reaction phosphoenolpyruvate + GTP + H(+) = enolpyruvoyl-2-diphospho-5'-guanosine + diphosphate. Its pathway is cofactor biosynthesis; coenzyme F420 biosynthesis. In terms of biological role, guanylyltransferase that catalyzes the activation of phosphoenolpyruvate (PEP) as enolpyruvoyl-2-diphospho-5'-guanosine, via the condensation of PEP with GTP. It is involved in the biosynthesis of coenzyme F420, a hydride carrier cofactor. This is Phosphoenolpyruvate guanylyltransferase from Rubrobacter xylanophilus (strain DSM 9941 / JCM 11954 / NBRC 16129 / PRD-1).